Here is a 147-residue protein sequence, read N- to C-terminus: Mediator of RNA polymerase II transcription subunit 10 (147 aa).

It belongs to the Mediator complex subunit 10 family. In terms of assembly, component of the Mediator complex.

The protein localises to the nucleus. In terms of biological role, component of the Mediator complex, a coactivator involved in the regulated transcription of nearly all RNA polymerase II-dependent genes. Mediator functions as a bridge to convey information from gene-specific regulatory proteins to the basal RNA polymerase II transcription machinery. Mediator is recruited to promoters by direct interactions with regulatory proteins and serves as a scaffold for the assembly of a functional preinitiation complex with RNA polymerase II and the general transcription factors. The polypeptide is Mediator of RNA polymerase II transcription subunit 10 (NUT2) (Debaryomyces hansenii (strain ATCC 36239 / CBS 767 / BCRC 21394 / JCM 1990 / NBRC 0083 / IGC 2968) (Yeast)).